Reading from the N-terminus, the 349-residue chain is UDP-3-O-acylglucosamine N-acyltransferase (349 aa).

Residue His-243 is the Proton acceptor of the active site.

Belongs to the transferase hexapeptide repeat family. LpxD subfamily. As to quaternary structure, homotrimer.

It carries out the reaction a UDP-3-O-[(3R)-3-hydroxyacyl]-alpha-D-glucosamine + a (3R)-hydroxyacyl-[ACP] = a UDP-2-N,3-O-bis[(3R)-3-hydroxyacyl]-alpha-D-glucosamine + holo-[ACP] + H(+). Its pathway is bacterial outer membrane biogenesis; LPS lipid A biosynthesis. Functionally, catalyzes the N-acylation of UDP-3-O-acylglucosamine using 3-hydroxyacyl-ACP as the acyl donor. Is involved in the biosynthesis of lipid A, a phosphorylated glycolipid that anchors the lipopolysaccharide to the outer membrane of the cell. The polypeptide is UDP-3-O-acylglucosamine N-acyltransferase (Myxococcus xanthus (strain DK1622)).